The sequence spans 158 residues: Large ribosomal subunit protein uL30 (158 aa).

This sequence belongs to the universal ribosomal protein uL30 family. Part of the 50S ribosomal subunit.

The sequence is that of Large ribosomal subunit protein uL30 from Sulfurisphaera tokodaii (strain DSM 16993 / JCM 10545 / NBRC 100140 / 7) (Sulfolobus tokodaii).